A 99-amino-acid chain; its full sequence is Acylphosphatase-2 (99 aa).

Ser2 carries the N-acetylserine modification. Positions 9–99 (SVDYEVFGRV…LEYSSFNIRY (91 aa)) constitute an Acylphosphatase-like domain. Active-site residues include Arg24 and Asn42. Phosphoserine is present on Ser93.

The protein belongs to the acylphosphatase family.

The enzyme catalyses an acyl phosphate + H2O = a carboxylate + phosphate + H(+). Functionally, its physiological role is not yet clear. This Bos taurus (Bovine) protein is Acylphosphatase-2 (ACYP2).